The sequence spans 905 residues: DNA gyrase subunit A (905 aa).

One can recognise a Topo IIA-type catalytic domain in the interval 35 to 524 (IPDVRDGLKP…GEFDQDIEDL (490 aa)). The O-(5'-phospho-DNA)-tyrosine intermediate role is filled by Tyr-123. Positions 551-557 (QKRGGKG) match the GyrA-box motif.

The protein belongs to the type II topoisomerase GyrA/ParC subunit family. In terms of assembly, heterotetramer, composed of two GyrA and two GyrB chains. In the heterotetramer, GyrA contains the active site tyrosine that forms a transient covalent intermediate with DNA, while GyrB binds cofactors and catalyzes ATP hydrolysis.

The protein resides in the cytoplasm. The enzyme catalyses ATP-dependent breakage, passage and rejoining of double-stranded DNA.. Functionally, a type II topoisomerase that negatively supercoils closed circular double-stranded (ds) DNA in an ATP-dependent manner to modulate DNA topology and maintain chromosomes in an underwound state. Negative supercoiling favors strand separation, and DNA replication, transcription, recombination and repair, all of which involve strand separation. Also able to catalyze the interconversion of other topological isomers of dsDNA rings, including catenanes and knotted rings. Type II topoisomerases break and join 2 DNA strands simultaneously in an ATP-dependent manner. The chain is DNA gyrase subunit A from Rickettsia typhi (strain ATCC VR-144 / Wilmington).